Consider the following 37-residue polypeptide: Cytochrome b6-f complex subunit 5 (37 aa).

The helical transmembrane segment at 5-25 (FLFGIVLGLIPITLAGLFVTA) threads the bilayer.

This sequence belongs to the PetG family. As to quaternary structure, the 4 large subunits of the cytochrome b6-f complex are cytochrome b6, subunit IV (17 kDa polypeptide, PetD), cytochrome f and the Rieske protein, while the 4 small subunits are PetG, PetL, PetM and PetN. The complex functions as a dimer.

The protein localises to the plastid thylakoid membrane. Its function is as follows. Component of the cytochrome b6-f complex, which mediates electron transfer between photosystem II (PSII) and photosystem I (PSI), cyclic electron flow around PSI, and state transitions. PetG is required for either the stability or assembly of the cytochrome b6-f complex. The sequence is that of Cytochrome b6-f complex subunit 5 from Cuscuta reflexa (Southern Asian dodder).